A 752-amino-acid polypeptide reads, in one-letter code: Neuroendocrine convertase 1 (752 aa).

An N-terminal signal peptide occupies residues 1–27 (MKQRGWTLQCTAFTLFCVWCALNSVKA). The propeptide occupies 28–110 (KRQFVNEWAA…QQYEKERRKR (83 aa)). The 322-residue stretch at 129–450 (QWYLQDTRMT…FGLLNAKALV (322 aa)) folds into the Peptidase S8 domain. Asp167 functions as the Charge relay system in the catalytic mechanism. Asn173 is a glycosylation site (N-linked (GlcNAc...) asparagine). Catalysis depends on His208, which acts as the Charge relay system. 2 disulfides stabilise this stretch: Cys225–Cys374 and Cys317–Cys347. Ser382 (charge relay system) is an active-site residue. Asn401 carries an N-linked (GlcNAc...) asparagine glycan. The P/Homo B domain maps to 460–597 (NVPEKKECII…KLILHGTSSQ (138 aa)). Cysteines 467 and 494 form a disulfide. Positions 631-662 (PTQNSLNGNLLVPKNSSSSSVEDRRDEQVQGA) are disordered. N-linked (GlcNAc...) asparagine glycosylation occurs at Asn645.

This sequence belongs to the peptidase S8 family. Furin subfamily. Requires Ca(2+) as cofactor.

The protein resides in the cytoplasmic vesicle. The protein localises to the secretory vesicle. The enzyme catalyses Release of protein hormones, neuropeptides and renin from their precursors, generally by hydrolysis of -Lys-Arg-|- bonds.. In terms of biological role, involved in the processing of hormone and other protein precursors at sites comprised of pairs of basic amino acid residues. Substrates include POMC, renin, enkephalin, dynorphin, somatostatin, insulin and AGRP. This Rattus norvegicus (Rat) protein is Neuroendocrine convertase 1 (Pcsk1).